Consider the following 277-residue polypeptide: F41 fimbrial protein (277 aa).

Positions Met-1–Ala-22 are cleaved as a signal peptide.

This sequence belongs to the fimbrial K88 protein family.

It is found in the fimbrium. Fimbriae (also called pili), polar filaments radiating from the surface of the bacterium to a length of 0.5-1.5 micrometers and numbering 100-300 per cell, enable bacteria to colonize the epithelium of specific host organs. This Escherichia coli protein is F41 fimbrial protein (FimF41a).